A 389-amino-acid chain; its full sequence is Succinate--CoA ligase [ADP-forming] subunit beta (389 aa).

The ATP-grasp domain occupies 9 to 244 (KQLLAEYGIP…KTQEDETEVT (236 aa)). ATP is bound by residues Lys-46, 53 to 55 (GRG), Gly-102, and Glu-107. Residues Asn-199 and Asp-213 each contribute to the Mg(2+) site. Residues Asn-264 and 321–323 (GIV) contribute to the substrate site.

This sequence belongs to the succinate/malate CoA ligase beta subunit family. As to quaternary structure, heterotetramer of two alpha and two beta subunits. It depends on Mg(2+) as a cofactor.

The enzyme catalyses succinate + ATP + CoA = succinyl-CoA + ADP + phosphate. It carries out the reaction GTP + succinate + CoA = succinyl-CoA + GDP + phosphate. It functions in the pathway carbohydrate metabolism; tricarboxylic acid cycle; succinate from succinyl-CoA (ligase route): step 1/1. Its function is as follows. Succinyl-CoA synthetase functions in the citric acid cycle (TCA), coupling the hydrolysis of succinyl-CoA to the synthesis of either ATP or GTP and thus represents the only step of substrate-level phosphorylation in the TCA. The beta subunit provides nucleotide specificity of the enzyme and binds the substrate succinate, while the binding sites for coenzyme A and phosphate are found in the alpha subunit. The sequence is that of Succinate--CoA ligase [ADP-forming] subunit beta from Xanthomonas campestris pv. campestris (strain 8004).